A 528-amino-acid chain; its full sequence is Phosphoenolpyruvate carboxykinase (ATP) (528 aa).

Substrate is bound by residues Arg56, Tyr192, and Lys198. ATP-binding positions include Lys198, His217, and 233 to 241 (GLSGTGKTT). Positions 198 and 217 each coordinate Mn(2+). Asp254 is a binding site for Mn(2+). Positions 282, 319, and 444 each coordinate ATP. A substrate-binding site is contributed by Arg319.

Belongs to the phosphoenolpyruvate carboxykinase (ATP) family. Requires Mn(2+) as cofactor.

It localises to the cytoplasm. It carries out the reaction oxaloacetate + ATP = phosphoenolpyruvate + ADP + CO2. It functions in the pathway carbohydrate biosynthesis; gluconeogenesis. Involved in the gluconeogenesis. Catalyzes the conversion of oxaloacetate (OAA) to phosphoenolpyruvate (PEP) through direct phosphoryl transfer between the nucleoside triphosphate and OAA. The polypeptide is Phosphoenolpyruvate carboxykinase (ATP) (Bacillus mycoides (strain KBAB4) (Bacillus weihenstephanensis)).